The following is a 523-amino-acid chain: Ubiquitin carboxyl-terminal hydrolase 22-B (523 aa).

The UBP-type zinc-finger motif lies at 4–121 (AGCSHVNSFK…KEEQRKAWKL (118 aa)). The Zn(2+) site is built by Cys-6, His-8, Cys-46, Cys-49, Cys-59, Cys-62, Cys-67, His-72, His-76, His-82, Cys-95, and Cys-98. The 345-residue stretch at 174–518 (RGLINLGNTC…EGYLLFYHKQ (345 aa)) folds into the USP domain. Cys-183 acts as the Nucleophile in catalysis. His-477 acts as the Proton acceptor in catalysis.

Belongs to the peptidase C19 family. UBP8 subfamily. As to quaternary structure, component of some SAGA transcription coactivator-HAT complexes.

Its subcellular location is the nucleus. The enzyme catalyses Thiol-dependent hydrolysis of ester, thioester, amide, peptide and isopeptide bonds formed by the C-terminal Gly of ubiquitin (a 76-residue protein attached to proteins as an intracellular targeting signal).. Its function is as follows. Histone deubiquitinating component of the transcription regulatory histone acetylation (HAT) complex SAGA. Catalyzes the deubiquitination of both histones H2A and H2B, thereby acting as a coactivator. Recruited to specific gene promoters by activators, where it is required for transcription. The sequence is that of Ubiquitin carboxyl-terminal hydrolase 22-B (usp22-b) from Xenopus laevis (African clawed frog).